Here is a 1288-residue protein sequence, read N- to C-terminus: MASVAWAVLKVLLLLPTQTWSPVGAGNPPDCDAPLASALPRSSFSSSSELSSSHGPGFSRLNRRDGAGGWTPLVSNKYQWLQIDLGERMEVTAVATQGGYGSSDWVTSYLLMFSDGGRNWKQYRREESIWGFPGNTNADSVVHYRLQPPFEARFLRFLPLAWNPRGRIGMRIEVYGCAYKSEVVYFDGQSALLYRLDKKPLKPIRDVISLKFKAMQSNGILLHREGQHGNHITLELIKGKLVFFLNSGNAKLPSTIAPVTLTLGSLLDDQHWHSVLIELLDTQVNFTVDKHTHHFQAKGDSSYLDLNFEISFGGIPTPGRSRAFRRKSFHGCLENLYYNGVDVTELAKKHKPQILMMGNVSFSCPQPQTVPVTFLSSRSYLALPGNSGEDKVSVTFQFRTWNRAGHLLFGELRRGSGSFVLFLKDGKLKLSLFQPGQSPRNVTAGAGLNDGQWHSVSFSAKWSHMNVVVDDDTAVQPLVAVLIDSGDTYYFGGCLDNSSGSGCKSPLGGFQGCLRLITIGDKAVDPILVQQGALGSFRDLQIDSCGITDRCLPSYCEHGGECSQSWDTFSCDCLGTGYTGETCHSSLYEQSCEAHKHRGNPSGLYYIDADGSGPLGPFLVYCNMTADAAWTVVQHGGPDAVTLRGAPSGHPRSAVSFAYAAGAGQLRSAVNLAERCEQRLALRCGTARRPDSRDGTPLSWWVGRTNETHTSWGGSLPDAQKCTCGLEGNCIDSQYYCNCDAGRNEWTSDTIVLSQKEHLPVTQIVMTDAGRPHSEAAYTLGPLLCRGDQSFWNSASFNTETSYLHFPAFHGELTADVCFFFKTTVSSGVFMENLGITDFIRIELRAPTEVTFSFDVGNGPCEVTVQSPTPFNDNQWHHVRAERNVKGASLQVDQLPQKMQPAPADGHVRLQLNSQLFIGGTATRQRGFLGCIRSLQLNGVALDLEERATVTPGVEPGCAGHCSTYGHLCRNGGRCREKRRGVTCDCAFSAYDGPFCSNEISAYFATGSSMTYHFQEHYTLSENSSSLVSSLHRDVTLTREMITLSFRTTRTPSLLLYVSSFYEEYLSVILANNGSLQIRYKLDRHQNPDAFTFDFKNMADGQLHQVKINREEAVVMVEVNQSTKKQVILSSGTEFNAVKSLILGKVLEAAGADPDTRRAATSGFTGCLSAVRFGRAAPLKAALRPSGPSRVTVRGHVAPMARCAAGAASGSPARELAPRLAGGAGRSGPADEGEPLVNADRRDSAVIGGVIAVVIFILLCITAIAIRIYQQRKLRKENESKVSKKEEC.

The signal sequence occupies residues Met-1 to Ala-25. Residues Gly-26–Ala-1245 lie on the Extracellular side of the membrane. An F5/8 type C domain is found at Cys-31 to Cys-177. An intrachain disulfide couples Cys-31 to Cys-177. Laminin G-like domains lie at Val-183–Cys-364 and Val-370–Cys-545. Asn-285, Asn-359, Asn-441, and Asn-497 each carry an N-linked (GlcNAc...) asparagine glycan. A disulfide bridge connects residues Cys-332 and Cys-364. 4 disulfide bridges follow: Cys-513–Cys-545, Cys-551–Cys-562, Cys-556–Cys-571, and Cys-573–Cys-583. The EGF-like 1 domain occupies Cys-551–Cys-583. In terms of domain architecture, Fibrinogen C-terminal spans His-584 to Trp-792. 2 N-linked (GlcNAc...) asparagine glycosylation sites follow: Asn-623 and Asn-706. In terms of domain architecture, Laminin G-like 3 spans Asn-793–Cys-958. 4 cysteine pairs are disulfide-bonded: Cys-931/Cys-958, Cys-962/Cys-975, Cys-969/Cys-984, and Cys-986/Cys-996. The region spanning Cys-962–Cys-996 is the EGF-like 2 domain. One can recognise a Laminin G-like 4 domain in the interval Gln-1015–Cys-1203. Asn-1023, Asn-1073, and Asn-1120 each carry an N-linked (GlcNAc...) asparagine glycan. An intrachain disulfide couples Cys-1167 to Cys-1203. Residues Glu-1215 to Leu-1236 form a disordered region. Residues Val-1246–Ile-1266 traverse the membrane as a helical segment. At Arg-1267–Cys-1288 the chain is on the cytoplasmic side.

The protein belongs to the neurexin family.

It is found in the cell membrane. The protein resides in the secreted. The polypeptide is Contactin-associated protein-like 3 (CNTNAP3) (Homo sapiens (Human)).